A 481-amino-acid polypeptide reads, in one-letter code: Betaine aldehyde dehydrogenase 2 (481 aa).

2 residues coordinate K(+): S29 and D96. An NAD(+)-binding site is contributed by 152–154; sequence GAW. K164 serves as the catalytic Charge relay system. Position 178 to 181 (178 to 181) interacts with NAD(+); that stretch reads KPSE. V182 contacts K(+). Residue 231-234 coordinates NAD(+); it reads SVKT. I246 contributes to the K(+) binding site. E252 acts as the Proton acceptor in catalysis. NAD(+)-binding residues include G254, C286, and E383. C286 functions as the Nucleophile in the catalytic mechanism. C286 is modified (cysteine sulfenic acid (-SOH)). Residues K453 and G456 each contribute to the K(+) site. The active-site Charge relay system is the E460.

The protein belongs to the aldehyde dehydrogenase family. As to quaternary structure, dimer of dimers. The cofactor is K(+).

It catalyses the reaction betaine aldehyde + NAD(+) + H2O = glycine betaine + NADH + 2 H(+). It participates in amine and polyamine biosynthesis; betaine biosynthesis via choline pathway; betaine from betaine aldehyde: step 1/1. Its function is as follows. Involved in the biosynthesis of the osmoprotectant glycine betaine. Catalyzes the irreversible oxidation of betaine aldehyde to the corresponding acid. The chain is Betaine aldehyde dehydrogenase 2 from Rhizobium meliloti (strain 1021) (Ensifer meliloti).